The primary structure comprises 419 residues: Inositol-tetrakisphosphate 1-kinase (419 aa).

Lysine 18 contacts 1D-myo-inositol 1,3,4-trisphosphate. ATP-binding residues include arginine 106 and lysine 157. Residues glutamate 117–alanine 334 form the ATP-grasp domain. Positions 167 and 199 each coordinate 1D-myo-inositol 1,3,4-trisphosphate. ATP is bound by residues glutamine 188 to lysine 199, serine 214, serine 232, and serine 236. Mg(2+) is bound by residues aspartate 281, aspartate 295, and asparagine 297. A 1D-myo-inositol 1,3,4-trisphosphate-binding site is contributed by asparagine 297. Lysine 388 bears the N6-acetyllysine; by EP300 and CREBBP mark. At serine 401 the chain carries Phosphoserine. Lysine 415 is subject to N6-acetyllysine; by EP300 and CREBBP.

It belongs to the ITPK1 family. Monomer. Interacts with GPS1/COPS1. Requires Mg(2+) as cofactor. Post-translationally, acetylation by EP300 and CREBBP destabilizes ITPK1, and down-regulates enzymatic activity. Deacetylated by SIRT1.

It carries out the reaction 1D-myo-inositol 3,4,5,6-tetrakisphosphate + ATP = 1D-myo-inositol 1,3,4,5,6-pentakisphosphate + ADP + H(+). The catalysed reaction is 1D-myo-inositol 1,3,4-trisphosphate + ATP = 1D-myo-inositol 1,3,4,5-tetrakisphosphate + ADP + H(+). The enzyme catalyses 1D-myo-inositol 1,3,4-trisphosphate + ATP = 1D-myo-inositol 1,3,4,6-tetrakisphosphate + ADP + H(+). It catalyses the reaction 1D-myo-inositol 3,4,6-trisphosphate + ATP = 1D-myo-inositol 1,3,4,6-tetrakisphosphate + ADP + H(+). It carries out the reaction 1D-myo-inositol 1,3,4-trisphosphate + 1D-myo-inositol 1,3,4,5,6-pentakisphosphate = 1D-myo-inositol 3,4,5,6-tetrakisphosphate + 1D-myo-inositol 1,3,4,6-tetrakisphosphate. The catalysed reaction is 1D-myo-inositol 1,3,4-trisphosphate + 1D-myo-inositol 1,3,4,5,6-pentakisphosphate = 1D-myo-inositol 3,4,5,6-tetrakisphosphate + 1D-myo-inositol 1,3,4,5-tetrakisphosphate. In terms of biological role, kinase that can phosphorylate various inositol polyphosphate such as Ins(3,4,5,6)P4 or Ins(1,3,4)P3. Phosphorylates Ins(3,4,5,6)P4 at position 1 to form Ins(1,3,4,5,6)P5. This reaction is thought to have regulatory importance, since Ins(3,4,5,6)P4 is an inhibitor of plasma membrane Ca(2+)-activated Cl(-) channels, while Ins(1,3,4,5,6)P5 is not. Also phosphorylates Ins(1,3,4)P3 on O-5 and O-6 to form Ins(1,3,4,6)P4, an essential molecule in the hexakisphosphate (InsP6) pathway. Also acts as an inositol polyphosphate phosphatase that dephosphorylates Ins(1,3,4,5)P4 and Ins(1,3,4,6)P4 to Ins(1,3,4)P3, and Ins(1,3,4,5,6)P5 to Ins(3,4,5,6)P4. May also act as an isomerase that interconverts the inositol tetrakisphosphate isomers Ins(1,3,4,5)P4 and Ins(1,3,4,6)P4 in the presence of ADP and magnesium. Probably acts as the rate-limiting enzyme of the InsP6 pathway. Modifies TNF-alpha-induced apoptosis by interfering with the activation of TNFRSF1A-associated death domain. Plays an important role in MLKL-mediated necroptosis. Produces highly phosphorylated inositol phosphates such as inositolhexakisphosphate (InsP6) which bind to MLKL mediating the release of an N-terminal auto-inhibitory region leading to its activation. Essential for activated phospho-MLKL to oligomerize and localize to the cell membrane during necroptosis. The protein is Inositol-tetrakisphosphate 1-kinase of Mus musculus (Mouse).